The following is a 271-amino-acid chain: Putative phosphoenolpyruvate synthase regulatory protein (271 aa).

Residue 151 to 158 (GVSRSGKT) coordinates ADP.

Belongs to the pyruvate, phosphate/water dikinase regulatory protein family. PSRP subfamily.

The enzyme catalyses [pyruvate, water dikinase] + ADP = [pyruvate, water dikinase]-phosphate + AMP + H(+). It carries out the reaction [pyruvate, water dikinase]-phosphate + phosphate + H(+) = [pyruvate, water dikinase] + diphosphate. Bifunctional serine/threonine kinase and phosphorylase involved in the regulation of the phosphoenolpyruvate synthase (PEPS) by catalyzing its phosphorylation/dephosphorylation. This is Putative phosphoenolpyruvate synthase regulatory protein from Burkholderia vietnamiensis (strain G4 / LMG 22486) (Burkholderia cepacia (strain R1808)).